Here is a 653-residue protein sequence, read N- to C-terminus: Protein CBFA2T3 (653 aa).

Over residues 1–10 (MPASRLRDRA) the composition is skewed to basic and acidic residues. The interval 1–109 (MPASRLRDRA…HTHREDGPAT (109 aa)) is disordered. The required for nucleolar targeting (in isoform 1) stretch occupies residues 1-127 (MPASRLRDRA…CLKWSMVCLL (127 aa)). Residues 1-430 (MPASRLRDRA…RRCQEADREE (430 aa)) are mediates interaction with PDE7A (in isoform 2). Residues 1 to 435 (MPASRLRDRA…ADREELNHWA (435 aa)) form a mediates localization to the nucleus region. Residues 11-23 (ASSASGSTCGSMS) are compositionally biased toward low complexity. Positions 75 to 86 (STPPSMPPPPPA) are enriched in pro residues. An interaction with ZBTB33 region spans residues 145–242 (PNGFSNGPAT…IPFLKANLPL (98 aa)). One can recognise a TAFH domain in the interval 171-266 (ARQLSKLKRF…TPAQYLAQHE (96 aa)). An interaction with HIF1A region spans residues 176 to 268 (KLKRFLTTLQ…AQYLAQHEQL (93 aa)). Positions 284–342 (LLEVNENGKRRTPDRTKENGSDRDPLHPEHLSKRPCTLNPAQRYSPSNGPPQPTPPPHY) are disordered. Residues 289 to 315 (ENGKRRTPDRTKENGSDRDPLHPEHLS) show a composition bias toward basic and acidic residues. Pro residues predominate over residues 331 to 341 (NGPPQPTPPPH). The interval 394–412 (EEWKHLNNLLNCIMDMVEK) is nervy homology region 2 (NHR2); essential for down-regulation of PFKFB3, PFKFB4 and PDK1 expression. A compositionally biased stretch (basic and acidic residues) spans 434-446 (WARRYSDAEDTKK). Positions 434–472 (WARRYSDAEDTKKGPAPAAARPRSSSAGPEGPQLDVPRE) are disordered. Residues 447-462 (GPAPAAARPRSSSAGP) are compositionally biased toward low complexity. A phosphoserine mark is found at S457 and S459. A Phosphothreonine modification is found at T479. The tract at residues 485 to 506 (DIWRKAEEAVNEVKRQAMSELQ) is mediates interaction with PRKAR2A. The tract at residues 485–533 (DIWRKAEEAVNEVKRQAMSELQKAVSDAERKAHELITTERAKMERALAE) is nervy homology region 3 (NHR3); essential for down-regulation of PFKFB3, PFKFB4 and PDK1 expression. Residues 488 to 543 (RKAEEAVNEVKRQAMSELQKAVSDAERKAHELITTERAKMERALAEAKRQASEDAL) adopt a coiled-coil conformation. Zn(2+)-binding residues include C556, C559, C567, C570, C576, C580, H588, and C592. An MYND-type zinc finger spans residues 556–592 (CWNCGRKASETCSGCNAARYCGSFCQHRDWEKHHHVC). A disordered region spans residues 603–653 (VADPVPGPPEAAHSLGPSLPVGAASPSEAGSAGPSRPGSPSPPGPLDTVPR). The segment covering 622 to 638 (PVGAASPSEAGSAGPSR) has biased composition (low complexity). S637 and S641 each carry phosphoserine. T650 is subject to Phosphothreonine.

The protein belongs to the CBFA2T family. Homooligomer. Homotetramerization is mediated by nervy homology region 2 (NRH2). Can interact with RUNX1T1 and CBFA2T2; heterotetramerization between members of the CBFA2T family is proposed. Component of a TAL-1 complex composed at least of CBFA2T3, LDB1, TAL1 and TCF3. Interacts with ERBB4, HDAC1, HDAC2, HDAC3, HDAC6, HDAC8, NCOR1, NCOR2, and ZNF652. According to PubMed:12242670, may not interact with HDAC6. Interacts with PLXNA1, PLXNA3 and PRKAR1A. Isoform 2 interacts with PRKAR2A, PDE7A and probably PDE4A. Interacts with ZBTB4, ZBTB38 and ZBTB33. Interacts with HIF1A and EGLN1. Interacts with the AML1-MTG8/ETO fusion protein. As to expression, widely expressed with higher expression in heart, pancreas, skeletal muscle, spleen, thymus and peripheral blood leukocytes. Expressed in hematopoietic cells (at protein level).

The protein localises to the nucleus. Its subcellular location is the nucleolus. The protein resides in the nucleoplasm. It localises to the golgi apparatus membrane. Transcriptional corepressor which facilitates transcriptional repression via its association with DNA-binding transcription factors and recruitment of other corepressors and histone-modifying enzymes. Can repress the expression of MMP7 in a ZBTB33-dependent manner. Reduces the protein levels and stability of the transcriptinal regulator HIF1A; interacts with EGLN1 and promotes the HIF1A prolyl hydroxylation-dependent ubiquitination and proteasomal degradation pathway. Contributes to inhibition of glycolysis and stimulation of mitochondrial respiration by down-regulating the expression of glycolytic genes including PFKFB3, PFKFB4, PDK1, PFKP, LDHA and HK1 which are direct targets of HIF1A. Regulates the proliferation and the differentiation of erythroid progenitors by repressing the expression of TAL1 target genes. Plays a role in granulocyte differentiation. Functionally, isoform 2 functions as an A-kinase-anchoring protein. This Homo sapiens (Human) protein is Protein CBFA2T3 (CBFA2T3).